The primary structure comprises 155 residues: Ribosome maturation factor RimP (155 aa).

Belongs to the RimP family.

It localises to the cytoplasm. Its function is as follows. Required for maturation of 30S ribosomal subunits. The chain is Ribosome maturation factor RimP from Prochlorococcus marinus (strain SARG / CCMP1375 / SS120).